We begin with the raw amino-acid sequence, 178 residues long: NADH-quinone oxidoreductase subunit B (178 aa).

Cys-45, Cys-46, Cys-111, and Cys-140 together coordinate [4Fe-4S] cluster.

This sequence belongs to the complex I 20 kDa subunit family. NDH-1 is composed of 15 different subunits. Subunits NuoB, C, D, E, F, and G constitute the peripheral sector of the complex. It depends on [4Fe-4S] cluster as a cofactor.

The protein resides in the cell membrane. It catalyses the reaction a quinone + NADH + 5 H(+)(in) = a quinol + NAD(+) + 4 H(+)(out). NDH-1 shuttles electrons from NADH, via FMN and iron-sulfur (Fe-S) centers, to quinones in the respiratory chain. The immediate electron acceptor for the enzyme in this species is believed to be a menaquinone. Couples the redox reaction to proton translocation (for every two electrons transferred, four hydrogen ions are translocated across the cytoplasmic membrane), and thus conserves the redox energy in a proton gradient. The chain is NADH-quinone oxidoreductase subunit B from Deinococcus deserti (strain DSM 17065 / CIP 109153 / LMG 22923 / VCD115).